Reading from the N-terminus, the 459-residue chain is tRNA(Ile)-lysidine synthase (459 aa).

38 to 43 (SGGMDS) contacts ATP.

It belongs to the tRNA(Ile)-lysidine synthase family.

The protein localises to the cytoplasm. The catalysed reaction is cytidine(34) in tRNA(Ile2) + L-lysine + ATP = lysidine(34) in tRNA(Ile2) + AMP + diphosphate + H(+). Ligates lysine onto the cytidine present at position 34 of the AUA codon-specific tRNA(Ile) that contains the anticodon CAU, in an ATP-dependent manner. Cytidine is converted to lysidine, thus changing the amino acid specificity of the tRNA from methionine to isoleucine. The sequence is that of tRNA(Ile)-lysidine synthase from Acinetobacter baylyi (strain ATCC 33305 / BD413 / ADP1).